Consider the following 398-residue polypeptide: Na(+)/H(+) antiporter NhaA (398 aa).

Helical transmembrane passes span 19 to 39 (IGGILLMLATALALIMANSPG), 64 to 84 (LLLWINDGLMAGFFFLVGLEL), 99 to 119 (IILPAIGALGGMVVPSCIYLA), 130 to 150 (GWAIPAATDIAFALGILSLLG), 159 to 179 (ILLTTLAIFDDIGAILIIACF), 182 to 202 (NDIYLPGLLIALLCMLILFIV), 222 to 242 (IAMLKSGVHATLAGVILAMFI), 266 to 286 (ATFIILPIFAFANSGINLTNI), 299 to 319 (IALGLFIGKPLGIISFLWVGV), 337 to 357 (GMSALAGIGFTMSLFVGSLAF), and 370 to 390 (LGIIMGSLFSGLLGYLLLNKT).

The protein belongs to the NhaA Na(+)/H(+) (TC 2.A.33) antiporter family.

Its subcellular location is the cell inner membrane. It catalyses the reaction Na(+)(in) + 2 H(+)(out) = Na(+)(out) + 2 H(+)(in). Na(+)/H(+) antiporter that extrudes sodium in exchange for external protons. The polypeptide is Na(+)/H(+) antiporter NhaA (Desulfotalea psychrophila (strain LSv54 / DSM 12343)).